The following is a 541-amino-acid chain: Protein VAPYRIN (541 aa).

The 135-residue stretch at 4 to 138 folds into the MSP domain; sequence LIKLDPSNIV…IDSAIKVMFV (135 aa). 10 ANK repeats span residues 176-205, 209-238, 242-271, 275-304, 309-338, 342-372, 374-392, 396-425, 429-458, and 462-491; these read QGQT…DIEA, VGST…NTEG, SVFR…RVDS, DGNT…RTDV, EGDT…TKYV, LGKT…CAAA, KGEV…VING, NGWT…DLDA, DGYT…DVEA, and KGVS…SREG.

Interacts with EX70I at the periarbuscular membrane (PAM) around the arbuscule hyphal tips. As to expression, expressed in roots.

The protein resides in the cytoplasm. Its subcellular location is the nucleus. It is found in the cell membrane. Functionally, required for arbuscular mycorrhizal (AM) symbiosis with AM fungi (e.g. Glomus versiforme and Gigaspora gigantea) both during fungal passage across root epidermis and for arbuscule formation in cortical cells; this symbiosis promotes phosphorus (P) and copper (Cu) uptake. Essential for infection by symbiotic nitrogen-fixing rhizobial bacteria (e.g. Sinorhizobium meliloti) leading to the formation of root nodules. This chain is Protein VAPYRIN, found in Medicago truncatula (Barrel medic).